The chain runs to 172 residues: Endoribonuclease YbeY (172 aa).

Positions 124, 128, and 134 each coordinate Zn(2+).

It belongs to the endoribonuclease YbeY family. Zn(2+) serves as cofactor.

The protein localises to the cytoplasm. Single strand-specific metallo-endoribonuclease involved in late-stage 70S ribosome quality control and in maturation of the 3' terminus of the 16S rRNA. The chain is Endoribonuclease YbeY from Rhodopseudomonas palustris (strain BisA53).